Here is a 60-residue protein sequence, read N- to C-terminus: Large ribosomal subunit protein bL32 (60 aa).

The tract at residues 1–21 (MAVPARHTSKAKKNKRRTHYK) is disordered. Over residues 7 to 20 (HTSKAKKNKRRTHY) the composition is skewed to basic residues.

This sequence belongs to the bacterial ribosomal protein bL32 family.

The protein is Large ribosomal subunit protein bL32 of Streptococcus uberis (strain ATCC BAA-854 / 0140J).